Here is a 349-residue protein sequence, read N- to C-terminus: Ribosomal RNA small subunit methyltransferase H (349 aa).

S-adenosyl-L-methionine is bound by residues 34 to 36 (GGH), aspartate 54, phenylalanine 81, aspartate 102, and glutamine 109.

Belongs to the methyltransferase superfamily. RsmH family.

It is found in the cytoplasm. It carries out the reaction cytidine(1402) in 16S rRNA + S-adenosyl-L-methionine = N(4)-methylcytidine(1402) in 16S rRNA + S-adenosyl-L-homocysteine + H(+). Its function is as follows. Specifically methylates the N4 position of cytidine in position 1402 (C1402) of 16S rRNA. The polypeptide is Ribosomal RNA small subunit methyltransferase H (Dehalococcoides mccartyi (strain ATCC BAA-2266 / KCTC 15142 / 195) (Dehalococcoides ethenogenes (strain 195))).